Here is a 328-residue protein sequence, read N- to C-terminus: 6-phosphogluconolactonase (328 aa).

This sequence belongs to the cycloisomerase 2 family.

It catalyses the reaction 6-phospho-D-glucono-1,5-lactone + H2O = 6-phospho-D-gluconate + H(+). The protein operates within carbohydrate degradation; pentose phosphate pathway; D-ribulose 5-phosphate from D-glucose 6-phosphate (oxidative stage): step 2/3. Catalyzes the hydrolysis of 6-phosphogluconolactone to 6-phosphogluconate. The polypeptide is 6-phosphogluconolactonase (Xenorhabdus nematophila (strain ATCC 19061 / DSM 3370 / CCUG 14189 / LMG 1036 / NCIMB 9965 / AN6)).